The sequence spans 790 residues: Cadherin-6 (790 aa).

A signal peptide spans 1–30 (MRTYHCFWLLFWAGQPHQSFLTLLSKRTSG). The propeptide occupies 31–53 (FPEKEKVLVLSGNSRRDLSRSKR). Cadherin domains lie at 54–159 (SWMW…EPMF), 160–268 (TKDV…PPRF), 269–383 (PQST…PPVF), 384–486 (SRPA…DNAP), and 487–608 (EFAM…LIHP). The Extracellular segment spans residues 54–615 (SWMWNQFFLL…IHPTGLSTGA (562 aa)). 2 N-linked (GlcNAc...) asparagine glycosylation sites follow: Asn165 and Asn255. Residues 261 to 289 (VNDNPPRFPQSTYQFRAPESTPPDSPIGR) form a disordered region. Asn437, Asn455, and Asn536 each carry an N-linked (GlcNAc...) asparagine glycan. Residues 616-636 (LIAILLCIIILLVTVVLFAAL) traverse the membrane as a helical segment. At 637 to 790 (RRQRKKEPLI…YGSMDSDKDS (154 aa)) the chain is on the cytoplasmic side.

It is found in the cell membrane. Its function is as follows. Cadherins are calcium-dependent cell adhesion proteins. They preferentially interact with themselves in a homophilic manner in connecting cells; cadherins may thus contribute to the sorting of heterogeneous cell types. This is Cadherin-6 (CDH6) from Gallus gallus (Chicken).